A 451-amino-acid chain; its full sequence is Magnesium transporter MgtE (451 aa).

Over 1–285 (MVQNMTYDEL…TKAYVAAYRR (285 aa)) the chain is Cytoplasmic. The Mg(2+) site is built by aspartate 64 and aspartate 96. 2 CBS domains span residues 140–203 (MTNR…VQDL) and 204–260 (MFTR…EADE). Glutamate 218, aspartate 228, aspartate 249, aspartate 252, glutamate 257, glutamate 260, and aspartate 261 together coordinate Mg(2+). A helical transmembrane segment spans residues 286-306 (LPWLILLLFIGLISGSIISYF). The Extracellular segment spans residues 307-311 (EDALK). A helical transmembrane segment spans residues 312 to 332 (QVVALAFFMPMVSGMTGNTGT). Topologically, residues 333-371 (QSLAVVIRGLSKEEMNKKTIVRLIFREFRTSIFIGAVCS) are cytoplasmic. Transmembrane regions (helical) follow at residues 372–392 (VLIA…FVVA) and 393–413 (SSLF…PIIL). Topologically, residues 414-427 (HKLKVDPAIASGPL) are cytoplasmic. Mg(2+)-binding residues include aspartate 419 and aspartate 433. A helical membrane pass occupies residues 428–448 (ITTLNDILSLLIYFGIATAFI). The Extracellular portion of the chain corresponds to 449-451 (HSL).

Belongs to the SLC41A transporter family. In terms of assembly, homodimer.

The protein resides in the cell membrane. The catalysed reaction is Mg(2+)(in) = Mg(2+)(out). Its activity is regulated as follows. Binds cyclic di-AMP (c-di-AMP), which may regulate the transporter activity. In terms of biological role, acts as a magnesium transporter. MgtE is the dominant transporter under rich-medium growth conditions, and it may provide the primary route of magnesium import in B.subtilis, while the other putative transport proteins are likely to be utilized for more-specialized growth conditions. This is Magnesium transporter MgtE from Bacillus subtilis (strain 168).